We begin with the raw amino-acid sequence, 238 residues long: 1-(5-phosphoribosyl)-5-[(5-phosphoribosylamino)methylideneamino] imidazole-4-carboxamide isomerase (238 aa).

Asp7 serves as the catalytic Proton acceptor. The active-site Proton donor is the Asp129.

The protein belongs to the HisA/HisF family.

It is found in the cytoplasm. The catalysed reaction is 1-(5-phospho-beta-D-ribosyl)-5-[(5-phospho-beta-D-ribosylamino)methylideneamino]imidazole-4-carboxamide = 5-[(5-phospho-1-deoxy-D-ribulos-1-ylimino)methylamino]-1-(5-phospho-beta-D-ribosyl)imidazole-4-carboxamide. Its pathway is amino-acid biosynthesis; L-histidine biosynthesis; L-histidine from 5-phospho-alpha-D-ribose 1-diphosphate: step 4/9. This chain is 1-(5-phosphoribosyl)-5-[(5-phosphoribosylamino)methylideneamino] imidazole-4-carboxamide isomerase, found in Leuconostoc mesenteroides subsp. mesenteroides (strain ATCC 8293 / DSM 20343 / BCRC 11652 / CCM 1803 / JCM 6124 / NCDO 523 / NBRC 100496 / NCIMB 8023 / NCTC 12954 / NRRL B-1118 / 37Y).